The chain runs to 75 residues: Small ribosomal subunit protein bS18 (75 aa).

It belongs to the bacterial ribosomal protein bS18 family. Part of the 30S ribosomal subunit. Forms a tight heterodimer with protein bS6.

In terms of biological role, binds as a heterodimer with protein bS6 to the central domain of the 16S rRNA, where it helps stabilize the platform of the 30S subunit. The sequence is that of Small ribosomal subunit protein bS18 from Shewanella baltica (strain OS223).